Consider the following 106-residue polypeptide: UPF0145 protein Athe_0545 (106 aa).

This sequence belongs to the UPF0145 family.

This chain is UPF0145 protein Athe_0545, found in Caldicellulosiruptor bescii (strain ATCC BAA-1888 / DSM 6725 / KCTC 15123 / Z-1320) (Anaerocellum thermophilum).